Consider the following 308-residue polypeptide: Aspartate carbamoyltransferase catalytic subunit (308 aa).

The carbamoyl phosphate site is built by Arg59 and Thr60. Lys87 is an L-aspartate binding site. Residues Arg109, His137, and Gln140 each coordinate carbamoyl phosphate. 2 residues coordinate L-aspartate: Arg173 and Arg224. 2 residues coordinate carbamoyl phosphate: Gly267 and Pro268.

The protein belongs to the aspartate/ornithine carbamoyltransferase superfamily. ATCase family. In terms of assembly, heterododecamer (2C3:3R2) of six catalytic PyrB chains organized as two trimers (C3), and six regulatory PyrI chains organized as three dimers (R2).

The enzyme catalyses carbamoyl phosphate + L-aspartate = N-carbamoyl-L-aspartate + phosphate + H(+). It functions in the pathway pyrimidine metabolism; UMP biosynthesis via de novo pathway; (S)-dihydroorotate from bicarbonate: step 2/3. Its function is as follows. Catalyzes the condensation of carbamoyl phosphate and aspartate to form carbamoyl aspartate and inorganic phosphate, the committed step in the de novo pyrimidine nucleotide biosynthesis pathway. The chain is Aspartate carbamoyltransferase catalytic subunit from Helicobacter acinonychis (strain Sheeba).